We begin with the raw amino-acid sequence, 261 residues long: Tryptophan synthase alpha chain (261 aa).

Catalysis depends on proton acceptor residues E47 and D58.

The protein belongs to the TrpA family. Tetramer of two alpha and two beta chains.

It catalyses the reaction (1S,2R)-1-C-(indol-3-yl)glycerol 3-phosphate + L-serine = D-glyceraldehyde 3-phosphate + L-tryptophan + H2O. It functions in the pathway amino-acid biosynthesis; L-tryptophan biosynthesis; L-tryptophan from chorismate: step 5/5. Functionally, the alpha subunit is responsible for the aldol cleavage of indoleglycerol phosphate to indole and glyceraldehyde 3-phosphate. The polypeptide is Tryptophan synthase alpha chain (Neisseria meningitidis serogroup A / serotype 4A (strain DSM 15465 / Z2491)).